The primary structure comprises 548 residues: Non-structural protein NS1 (548 aa).

It belongs to the orbivirus non-structural protein NS1 family.

The protein is Non-structural protein NS1 (Segment-5) of Camelus dromedarius (Dromedary).